The chain runs to 424 residues: Arogenate dehydratase 4, chloroplastic (424 aa).

The transit peptide at 1–34 (MQAATSCDLKFRSTDPTSRNKCFSHAIPKRVAVT) directs the protein to the chloroplast. Positions 126–303 (RVAYQGVPGA…NVTRFLMLAR (178 aa)) constitute a Prephenate dehydratase domain. The 92-residue stretch at 319–410 (VFAAQEHKGT…SFLRVLGSYP (92 aa)) folds into the ACT domain.

In terms of tissue distribution, expressed in roots, leaves, stems, flowers and siliques. More abundant in stems and roots.

Its subcellular location is the plastid. It localises to the chloroplast stroma. It catalyses the reaction L-arogenate + H(+) = L-phenylalanine + CO2 + H2O. It functions in the pathway amino-acid biosynthesis; L-phenylalanine biosynthesis; L-phenylalanine from L-arogenate: step 1/1. Its function is as follows. Converts the prephenate produced from the shikimate-chorismate pathway into phenylalanine. The chain is Arogenate dehydratase 4, chloroplastic from Arabidopsis thaliana (Mouse-ear cress).